The chain runs to 183 residues: tRNA-splicing endonuclease (183 aa).

Active-site residues include Y120, H128, and K159.

The protein belongs to the tRNA-intron endonuclease family. Archaeal short subfamily. As to quaternary structure, homotetramer; although the tetramer contains four active sites, only two participate in the cleavage. Therefore, it should be considered as a dimer of dimers.

The catalysed reaction is pretRNA = a 3'-half-tRNA molecule with a 5'-OH end + a 5'-half-tRNA molecule with a 2',3'-cyclic phosphate end + an intron with a 2',3'-cyclic phosphate and a 5'-hydroxyl terminus.. Its function is as follows. Endonuclease that removes tRNA introns. Cleaves pre-tRNA at the 5'- and 3'-splice sites to release the intron. The products are an intron and two tRNA half-molecules bearing 2',3' cyclic phosphate and 5'-OH termini. Recognizes a pseudosymmetric substrate in which 2 bulged loops of 3 bases are separated by a stem of 4 bp. The polypeptide is tRNA-splicing endonuclease (Pyrobaculum islandicum (strain DSM 4184 / JCM 9189 / GEO3)).